Here is a 334-residue protein sequence, read N- to C-terminus: Phosphoribosylformylglycinamidine cyclo-ligase (334 aa).

Belongs to the AIR synthase family.

It localises to the cytoplasm. The catalysed reaction is 2-formamido-N(1)-(5-O-phospho-beta-D-ribosyl)acetamidine + ATP = 5-amino-1-(5-phospho-beta-D-ribosyl)imidazole + ADP + phosphate + H(+). It functions in the pathway purine metabolism; IMP biosynthesis via de novo pathway; 5-amino-1-(5-phospho-D-ribosyl)imidazole from N(2)-formyl-N(1)-(5-phospho-D-ribosyl)glycinamide: step 2/2. This is Phosphoribosylformylglycinamidine cyclo-ligase from Thermococcus gammatolerans (strain DSM 15229 / JCM 11827 / EJ3).